A 123-amino-acid polypeptide reads, in one-letter code: Small ribosomal subunit protein uS13 (123 aa).

The tract at residues 93 to 123 (RRNLPVRGQKTKTNARTRKGPKRAIGGKKKK) is disordered.

This sequence belongs to the universal ribosomal protein uS13 family. Part of the 30S ribosomal subunit. Forms a loose heterodimer with protein S19. Forms two bridges to the 50S subunit in the 70S ribosome.

Its function is as follows. Located at the top of the head of the 30S subunit, it contacts several helices of the 16S rRNA. In the 70S ribosome it contacts the 23S rRNA (bridge B1a) and protein L5 of the 50S subunit (bridge B1b), connecting the 2 subunits; these bridges are implicated in subunit movement. Contacts the tRNAs in the A and P-sites. The sequence is that of Small ribosomal subunit protein uS13 from Clostridium botulinum (strain Loch Maree / Type A3).